A 42-amino-acid polypeptide reads, in one-letter code: Large ribosomal subunit protein bL36 (42 aa).

The protein belongs to the bacterial ribosomal protein bL36 family.

The chain is Large ribosomal subunit protein bL36 from Ehrlichia chaffeensis (strain ATCC CRL-10679 / Arkansas).